The following is a 454-amino-acid chain: Neuronal acetylcholine receptor subunit alpha-5 (454 aa).

The interval 1–26 is disordered; that stretch reads MPLRARSRKPGAGPAARAPQAGVSEP. The signal sequence occupies residues 1–29; it reads MPLRARSRKPGAGPAARAPQAGVSEPSFV. The segment covering 10–22 has biased composition (low complexity); the sequence is PGAGPAARAPQAG. Residues 30–240 are Extracellular-facing; that stretch reads AKSEDRLFKH…IIRRLPLFYT (211 aa). Asn55, Asn169, and Asn215 each carry an N-linked (GlcNAc...) asparagine glycan. Cys156 and Cys170 are disulfide-bonded. A disulfide bridge connects residues Cys220 and Cys221. Transmembrane regions (helical) follow at residues 241–261, 270–290, and 303–323; these read LFLIIPCIGLSFLTVLVFYLP, LCTSVLVSLTVFLLVIEEIIP, and LVFTMIFVTLSIVITVFAINI. Residues 324 to 416 lie on the Cytoplasmic side of the membrane; sequence HHRSSSTHNA…KFIAQVLDRM (93 aa). The chain crosses the membrane as a helical span at residues 417–437; it reads FLWAFLLVSIIGSLVLFIPVI. The Extracellular portion of the chain corresponds to 438–454; sequence HKWASIIVPVHIGSTNT.

It belongs to the ligand-gated ion channel (TC 1.A.9) family. Acetylcholine receptor (TC 1.A.9.1) subfamily. Alpha-5/CHRNA5 sub-subfamily. As to quaternary structure, neuronal AChR that forms heteropentamers composed of two different type of subunits: alpha and non-alpha (beta). CHRNA5/alpha-5 subunit is only able to form functional nAChRs when co-assembled with another alpha subunit, can be combined to CHRNA4/alpha-4 or CHRNA3/alpha-3 and CHRNB4/beta-4 or CHRNB2/beta-2 to give rise to functional receptors. Interacts with LYPD6.

The protein localises to the synaptic cell membrane. The protein resides in the cell membrane. The enzyme catalyses Ca(2+)(in) = Ca(2+)(out). It carries out the reaction K(+)(in) = K(+)(out). The catalysed reaction is Na(+)(in) = Na(+)(out). With respect to regulation, activated by a myriad of ligands such as acetylcholine, cytisine, nicotine, choline and epibatidine. Functionally, component of neuronal acetylcholine receptors (nAChRs) that function as pentameric, ligand-gated cation channels with high calcium permeability among other activities. nAChRs are excitatory neurotrasnmitter receptors formed by a collection of nAChR subunits known to mediate synaptic transmission in the nervous system and the neuromuscular junction. Each nAchR subunit confers differential attributes to channel properties, including activation, deactivation and desensitization kinetics, pH sensitivity, cation permeability, and binding to allosteric modulators. Has an accessory rather than functional role and is only able to form functional nAChRs when co-assembled with another beta subunit. Participates in pentameric assemblies along with CHRNA3, CHRNA4, CHRNB2 and CHRNB4. Increases receptor sensitivity to acetylcholine and nicotine when associated with CHRNA4 and CHRNB2. Plays a role in nicotine addiction. In Gallus gallus (Chicken), this protein is Neuronal acetylcholine receptor subunit alpha-5 (CHRNA5).